Here is a 717-residue protein sequence, read N- to C-terminus: Ribosomal RNA large subunit methyltransferase K/L (717 aa).

In terms of domain architecture, THUMP spans 43 to 154; sequence IGYKACLWSR…KGKANITLDL (112 aa).

This sequence belongs to the methyltransferase superfamily. RlmKL family.

It localises to the cytoplasm. It catalyses the reaction guanosine(2445) in 23S rRNA + S-adenosyl-L-methionine = N(2)-methylguanosine(2445) in 23S rRNA + S-adenosyl-L-homocysteine + H(+). It carries out the reaction guanosine(2069) in 23S rRNA + S-adenosyl-L-methionine = N(2)-methylguanosine(2069) in 23S rRNA + S-adenosyl-L-homocysteine + H(+). Its function is as follows. Specifically methylates the guanine in position 2445 (m2G2445) and the guanine in position 2069 (m7G2069) of 23S rRNA. This Aeromonas hydrophila subsp. hydrophila (strain ATCC 7966 / DSM 30187 / BCRC 13018 / CCUG 14551 / JCM 1027 / KCTC 2358 / NCIMB 9240 / NCTC 8049) protein is Ribosomal RNA large subunit methyltransferase K/L.